The chain runs to 588 residues: Aspartate--tRNA ligase (588 aa).

Glutamate 177 contributes to the L-aspartate binding site. Positions 201–204 (QLFK) are aspartate. Arginine 223 contributes to the L-aspartate binding site. Residues 223–225 (RDE) and glutamine 232 contribute to the ATP site. Residue histidine 451 coordinates L-aspartate. Glutamate 485 contributes to the ATP binding site. Arginine 492 serves as a coordination point for L-aspartate. Residue 537–540 (GLDR) participates in ATP binding.

It belongs to the class-II aminoacyl-tRNA synthetase family. Type 1 subfamily. Homodimer.

Its subcellular location is the cytoplasm. The catalysed reaction is tRNA(Asp) + L-aspartate + ATP = L-aspartyl-tRNA(Asp) + AMP + diphosphate. Catalyzes the attachment of L-aspartate to tRNA(Asp) in a two-step reaction: L-aspartate is first activated by ATP to form Asp-AMP and then transferred to the acceptor end of tRNA(Asp). In Staphylococcus aureus (strain MRSA252), this protein is Aspartate--tRNA ligase.